The chain runs to 197 residues: Histocompatibility antigen 60c (197 aa).

The first 17 residues, 1–17 (MALLLLILESCSAGTYA), serve as a signal peptide directing secretion. N-linked (GlcNAc...) asparagine glycans are attached at residues Asn51, Asn81, and Asn114. Residue Ser177 is the site of GPI-anchor amidated serine attachment. A propeptide spans 178–197 (MACKSSPFDGLIMILLIYIL) (removed in mature form).

This sequence belongs to the NKG2D ligand family. Expressed in skin, and weakly in large intestine.

It localises to the cell membrane. Its function is as follows. Ligand for the KLRK1 immunosurveillance receptor. Binding to KLRK1 stimulates cell lysis in vitro. In Mus musculus (Mouse), this protein is Histocompatibility antigen 60c.